Here is a 106-residue protein sequence, read N- to C-terminus: Putative membrane protein insertion efficiency factor (106 aa).

This sequence belongs to the UPF0161 family.

The protein localises to the cell inner membrane. In terms of biological role, could be involved in insertion of integral membrane proteins into the membrane. This Acinetobacter baylyi (strain ATCC 33305 / BD413 / ADP1) protein is Putative membrane protein insertion efficiency factor.